Consider the following 106-residue polypeptide: 3-phenylpropionate/cinnamic acid dioxygenase ferredoxin subunit (106 aa).

One can recognise a Rieske domain in the interval 4–99 (IYACPVADVP…VHVEGGDIFI (96 aa)). The [2Fe-2S] cluster site is built by C42, H44, C62, and H65.

Belongs to the bacterial ring-hydroxylating dioxygenase ferredoxin component family. As to quaternary structure, this dioxygenase system consists of four proteins: the two subunits of the hydroxylase component (HcaE and HcaF), a ferredoxin (HcaC) and a ferredoxin reductase (HcaD). Requires [2Fe-2S] cluster as cofactor.

It participates in aromatic compound metabolism; 3-phenylpropanoate degradation. Its function is as follows. Part of the multicomponent 3-phenylpropionate dioxygenase, that converts 3-phenylpropionic acid (PP) and cinnamic acid (CI) into 3-phenylpropionate-dihydrodiol (PP-dihydrodiol) and cinnamic acid-dihydrodiol (CI-dihydrodiol), respectively. This protein seems to be a 2Fe-2S ferredoxin. The chain is 3-phenylpropionate/cinnamic acid dioxygenase ferredoxin subunit from Shigella flexneri serotype 5b (strain 8401).